The following is a 184-amino-acid chain: MLHSALLNGVIMVGIILVINIIYVTFLTLRMILTLKGQRYLAAFIGTIEMLVYVVGLGLVLDNLNQIQNVIAYAVGFGIGIIVGTKIEEKLALGYITVNAITKELDLDLPKQLREKGYGVTHWVVGGLEGDRTAMQILTPRKYELQLYETIKSIDSKAFIISYEPKTIHGGFWVKAVKKRRIKE.

3 helical membrane passes run 9 to 29 (GVIM…FLTL), 41 to 61 (LAAF…GLVL), and 67 to 87 (IQNV…GTKI).

The protein belongs to the UPF0316 family.

Its subcellular location is the cell membrane. This chain is UPF0316 protein BLi00691/BL01474, found in Bacillus licheniformis (strain ATCC 14580 / DSM 13 / JCM 2505 / CCUG 7422 / NBRC 12200 / NCIMB 9375 / NCTC 10341 / NRRL NRS-1264 / Gibson 46).